A 545-amino-acid chain; its full sequence is MNDFWQHCSALLERELTPQQYVTWIKPLAPVAFDAAANTLSIAAPNRFKLDWVKSQFSGRIADMARDFWQAPVDVQFVLDPKAGMRAPAAAAPAPASARPASAPGSMGGSAGNGAAVDAAVGAVQAAQAARAAGTNGANNAMANLNANARAAAEQNANARAAAADDSADLDLPSLDANEAAAARRTWRPGQSASSNGNGETDSMYERSKLNPVLTFDNFVTGKANQLARAAAIQVADNPGISYNPLFLYGGVGLGKTHLIHAIGNQLLMDKAGARIRYIHAEQYVSDVVKAYQRKAFDDFKRYYHSLDLLLIDDIQFFSGKSRTQEEFFYAFEALVANKAQVIITSDTYPKEISGIDDRLISRFDSGLTVAIEPPELEMRVAILMRKAQSEFVSLNEDVAFFVAKHLRSNVRELEGALRKILAYSKFHGREITIEVTKEALKDLLTVQNRQISVENIQKTTADFYSIKVADMYSKKRPANIARPRQIAMYLAKELTQKSLPEIGELFGGRDHTTVLHAVRKIADERSKDAQLNHELHVLEQTLKG.

Positions 1-72 (MNDFWQHCSA…DMARDFWQAP (72 aa)) are domain I, interacts with DnaA modulators. The tract at residues 72 to 208 (PVDVQFVLDP…GETDSMYERS (137 aa)) is domain II. Positions 90–105 (AAAPAPASARPASAPG) are enriched in low complexity. 2 disordered regions span residues 90 to 112 (AAAP…GSAG) and 181 to 204 (AAAR…TDSM). Positions 189–201 (PGQSASSNGNGET) are enriched in polar residues. The tract at residues 209-425 (KLNPVLTFDN…GALRKILAYS (217 aa)) is domain III, AAA+ region. ATP contacts are provided by G253, G255, K256, and T257. The interval 426-545 (KFHGREITIE…LHVLEQTLKG (120 aa)) is domain IV, binds dsDNA.

This sequence belongs to the DnaA family. In terms of assembly, oligomerizes as a right-handed, spiral filament on DNA at oriC.

The protein resides in the cytoplasm. Plays an essential role in the initiation and regulation of chromosomal replication. ATP-DnaA binds to the origin of replication (oriC) to initiate formation of the DNA replication initiation complex once per cell cycle. Binds the DnaA box (a 9 base pair repeat at the origin) and separates the double-stranded (ds)DNA. Forms a right-handed helical filament on oriC DNA; dsDNA binds to the exterior of the filament while single-stranded (ss)DNA is stabiized in the filament's interior. The ATP-DnaA-oriC complex binds and stabilizes one strand of the AT-rich DNA unwinding element (DUE), permitting loading of DNA polymerase. After initiation quickly degrades to an ADP-DnaA complex that is not apt for DNA replication. Binds acidic phospholipids. This is Chromosomal replication initiator protein DnaA from Paraburkholderia phytofirmans (strain DSM 17436 / LMG 22146 / PsJN) (Burkholderia phytofirmans).